The following is a 185-amino-acid chain: Potassium-transporting ATPase KdpC subunit (185 aa).

A helical transmembrane segment spans residues 14–34; the sequence is ALSLLTGVAYPLALTGIAAVI.

The protein belongs to the KdpC family. The system is composed of three essential subunits: KdpA, KdpB and KdpC.

The protein localises to the cell inner membrane. In terms of biological role, part of the high-affinity ATP-driven potassium transport (or Kdp) system, which catalyzes the hydrolysis of ATP coupled with the electrogenic transport of potassium into the cytoplasm. This subunit acts as a catalytic chaperone that increases the ATP-binding affinity of the ATP-hydrolyzing subunit KdpB by the formation of a transient KdpB/KdpC/ATP ternary complex. The protein is Potassium-transporting ATPase KdpC subunit of Cereibacter sphaeroides (strain KD131 / KCTC 12085) (Rhodobacter sphaeroides).